A 201-amino-acid polypeptide reads, in one-letter code: Nucleoside triphosphate pyrophosphatase (201 aa).

Residue D77 is the Proton acceptor of the active site.

The protein belongs to the Maf family. A divalent metal cation is required as a cofactor.

Its subcellular location is the cytoplasm. The enzyme catalyses a ribonucleoside 5'-triphosphate + H2O = a ribonucleoside 5'-phosphate + diphosphate + H(+). The catalysed reaction is a 2'-deoxyribonucleoside 5'-triphosphate + H2O = a 2'-deoxyribonucleoside 5'-phosphate + diphosphate + H(+). Its function is as follows. Nucleoside triphosphate pyrophosphatase. May have a dual role in cell division arrest and in preventing the incorporation of modified nucleotides into cellular nucleic acids. The sequence is that of Nucleoside triphosphate pyrophosphatase from Rickettsia akari (strain Hartford).